The following is a 186-amino-acid chain: Peptidyl-tRNA hydrolase (186 aa).

Tyrosine 14 contributes to the tRNA binding site. Residue histidine 19 is the Proton acceptor of the active site. Phenylalanine 64, asparagine 66, and asparagine 112 together coordinate tRNA.

This sequence belongs to the PTH family. As to quaternary structure, monomer.

It localises to the cytoplasm. It catalyses the reaction an N-acyl-L-alpha-aminoacyl-tRNA + H2O = an N-acyl-L-amino acid + a tRNA + H(+). Functionally, hydrolyzes ribosome-free peptidyl-tRNAs (with 1 or more amino acids incorporated), which drop off the ribosome during protein synthesis, or as a result of ribosome stalling. In terms of biological role, catalyzes the release of premature peptidyl moieties from peptidyl-tRNA molecules trapped in stalled 50S ribosomal subunits, and thus maintains levels of free tRNAs and 50S ribosomes. In Listeria monocytogenes serovar 1/2a (strain ATCC BAA-679 / EGD-e), this protein is Peptidyl-tRNA hydrolase.